A 155-amino-acid chain; its full sequence is 3-dehydroquinate dehydratase (155 aa).

Tyr32 functions as the Proton acceptor in the catalytic mechanism. Residues Asn84, His90, and Asp97 each coordinate substrate. His110 (proton donor) is an active-site residue. Substrate-binding positions include 111 to 112 and Arg121; that span reads LS.

Belongs to the type-II 3-dehydroquinase family. Homododecamer.

It catalyses the reaction 3-dehydroquinate = 3-dehydroshikimate + H2O. It participates in metabolic intermediate biosynthesis; chorismate biosynthesis; chorismate from D-erythrose 4-phosphate and phosphoenolpyruvate: step 3/7. Catalyzes a trans-dehydration via an enolate intermediate. In Ralstonia pickettii (strain 12J), this protein is 3-dehydroquinate dehydratase.